We begin with the raw amino-acid sequence, 409 residues long: Argininosuccinate synthase (409 aa).

ATP is bound by residues 10 to 18 (AYSGGLDTS) and A37. L-citrulline-binding residues include Y90 and S95. G120 contacts ATP. L-aspartate contacts are provided by T122, N126, and D127. Residue N126 participates in L-citrulline binding. Residues R130, S182, S191, E267, and Y279 each contribute to the L-citrulline site.

The protein belongs to the argininosuccinate synthase family. Type 1 subfamily. In terms of assembly, homotetramer.

Its subcellular location is the cytoplasm. The enzyme catalyses L-citrulline + L-aspartate + ATP = 2-(N(omega)-L-arginino)succinate + AMP + diphosphate + H(+). Its pathway is amino-acid biosynthesis; L-arginine biosynthesis; L-arginine from L-ornithine and carbamoyl phosphate: step 2/3. The polypeptide is Argininosuccinate synthase (Thiobacillus denitrificans (strain ATCC 25259 / T1)).